Reading from the N-terminus, the 741-residue chain is Polyribonucleotide nucleotidyltransferase (741 aa).

2 residues coordinate Mg(2+): Asp-489 and Asp-495. A KH domain is found at 556–615 (PKIDSIQIPVDKIKVVIGKGGETIDKIIAETGVTIDIDEEGLVQIFSSDQDAIDRAKTII). Residues 625 to 693 (GEVYTVPVVR…EKGRVDASIK (69 aa)) enclose the S1 motif domain. Residues 696-741 (LPKPEKNEDGENGEEHRHCCCSHHKPDHHSESMEAPKKSDESETKE) form a disordered region. Basic and acidic residues-rich tracts occupy residues 698 to 713 (KPEK…EHRH) and 723 to 741 (HHSE…ETKE).

Belongs to the polyribonucleotide nucleotidyltransferase family. Mg(2+) is required as a cofactor.

The protein localises to the cytoplasm. It carries out the reaction RNA(n+1) + phosphate = RNA(n) + a ribonucleoside 5'-diphosphate. Functionally, involved in mRNA degradation. Catalyzes the phosphorolysis of single-stranded polyribonucleotides processively in the 3'- to 5'-direction. This chain is Polyribonucleotide nucleotidyltransferase, found in Streptococcus thermophilus (strain ATCC BAA-491 / LMD-9).